The following is a 390-amino-acid chain: 8-amino-7-oxononanoate synthase (390 aa).

Residue Arg-19 coordinates substrate. 106–107 provides a ligand contact to pyridoxal 5'-phosphate; sequence GY. His-131 is a substrate binding site. Residues Ser-176, His-204, and Thr-233 each contribute to the pyridoxal 5'-phosphate site. The residue at position 236 (Lys-236) is an N6-(pyridoxal phosphate)lysine. Thr-350 contacts substrate.

Belongs to the class-II pyridoxal-phosphate-dependent aminotransferase family. BioF subfamily. Homodimer. The cofactor is pyridoxal 5'-phosphate.

The enzyme catalyses 6-carboxyhexanoyl-[ACP] + L-alanine + H(+) = (8S)-8-amino-7-oxononanoate + holo-[ACP] + CO2. The protein operates within cofactor biosynthesis; biotin biosynthesis. In terms of biological role, catalyzes the decarboxylative condensation of pimeloyl-[acyl-carrier protein] and L-alanine to produce 8-amino-7-oxononanoate (AON), [acyl-carrier protein], and carbon dioxide. The protein is 8-amino-7-oxononanoate synthase of Pseudomonas entomophila (strain L48).